Consider the following 186-residue polypeptide: Methyl-CpG-binding domain protein 3-like 1 (186 aa).

The transcription repressor stretch occupies residues 1-104 (MGKTSQRKQC…TSTDTVASAS (104 aa)).

Belongs to the MBD3L family. As to expression, highly expressed in testis. Not detected in the other tissues tested.

Its subcellular location is the nucleus. Its function is as follows. Transcriptional repressor. In Mus musculus (Mouse), this protein is Methyl-CpG-binding domain protein 3-like 1 (Mbd3l1).